We begin with the raw amino-acid sequence, 1065 residues long: DNA-directed RNA polymerase subunit beta (1065 aa).

Belongs to the RNA polymerase beta chain family. In plastids the minimal PEP RNA polymerase catalytic core is composed of four subunits: alpha, beta, beta', and beta''. When a (nuclear-encoded) sigma factor is associated with the core the holoenzyme is formed, which can initiate transcription.

It localises to the plastid. Its subcellular location is the chloroplast. The enzyme catalyses RNA(n) + a ribonucleoside 5'-triphosphate = RNA(n+1) + diphosphate. DNA-dependent RNA polymerase catalyzes the transcription of DNA into RNA using the four ribonucleoside triphosphates as substrates. The polypeptide is DNA-directed RNA polymerase subunit beta (Marchantia polymorpha (Common liverwort)).